Reading from the N-terminus, the 180-residue chain is MAEKKRAQEQEKVQEDQKMQNEQNECEEVEKKLQECEEKYLRVHADFENTKKRLEREKIQAIEYSLEKFAQDLLPALDSLDMALAAVSHDNLNAEEAVKELKKGIELTIDQFIKAFNKNGIEVIEIEEGGEFNPHLHEAILQVDDAEKKAGQIVQVIQKGYKYKERILRPAKVSVAKGNE.

Residues 1-19 (MAEKKRAQEQEKVQEDQKM) are compositionally biased toward basic and acidic residues. Positions 1-25 (MAEKKRAQEQEKVQEDQKMQNEQNE) are disordered.

Belongs to the GrpE family. As to quaternary structure, homodimer.

It localises to the cytoplasm. Participates actively in the response to hyperosmotic and heat shock by preventing the aggregation of stress-denatured proteins, in association with DnaK and GrpE. It is the nucleotide exchange factor for DnaK and may function as a thermosensor. Unfolded proteins bind initially to DnaJ; upon interaction with the DnaJ-bound protein, DnaK hydrolyzes its bound ATP, resulting in the formation of a stable complex. GrpE releases ADP from DnaK; ATP binding to DnaK triggers the release of the substrate protein, thus completing the reaction cycle. Several rounds of ATP-dependent interactions between DnaJ, DnaK and GrpE are required for fully efficient folding. The chain is Protein GrpE from Nitratiruptor sp. (strain SB155-2).